A 441-amino-acid chain; its full sequence is Probable xylan O-acetyltransferase 10 (441 aa).

Over 1–19 the chain is Cytoplasmic; it reads MMKPQHGGMAGHGGGRTRS. Residues 20-40 form a helical; Signal-anchor for type II membrane protein membrane-spanning segment; it reads PFLTSYALTLAFITFVSVLYF. Topologically, residues 41–441 are lumenal; the sequence is KDFSSTLHQP…ELLYSKLFFP (401 aa). The interval 50 to 81 is disordered; sequence PFLTRPPPHRRQIARPRAPSHHHGGGSSSGGG. The segment covering 56–73 has biased composition (basic residues); the sequence is PPHRRQIARPRAPSHHHG. 4 disulfide bridges follow: C97-C148, C119-C184, C128-C422, and C341-C418. N-linked (GlcNAc...) asparagine glycosylation occurs at N154. The GDS motif signature appears at 171 to 173; the sequence is GDS. The Nucleophile role is filled by S173. N212, N343, and N381 each carry an N-linked (GlcNAc...) asparagine glycan. Catalysis depends on D417, which acts as the Proton donor. A DXXH motif motif is present at residues 417–420; the sequence is DCTH. H420 (proton acceptor) is an active-site residue.

Belongs to the PC-esterase family. TBL subfamily. In terms of tissue distribution, expressed in roots, leaves and stems.

It is found in the golgi apparatus membrane. Functionally, probable xylan acetyltransferase required for 2-O- and 3-O-monoacetylation of xylosyl residues in xylan. Possesses extremely low activity in vitro. The protein is Probable xylan O-acetyltransferase 10 of Oryza sativa subsp. japonica (Rice).